We begin with the raw amino-acid sequence, 336 residues long: tRNA N6-adenosine threonylcarbamoyltransferase (336 aa).

Histidine 111 and histidine 115 together coordinate Fe cation. Substrate contacts are provided by residues 134-138 (LVSGG), aspartate 167, glycine 180, and asparagine 271. Aspartate 299 is a Fe cation binding site.

It belongs to the KAE1 / TsaD family. The cofactor is Fe(2+).

Its subcellular location is the cytoplasm. The catalysed reaction is L-threonylcarbamoyladenylate + adenosine(37) in tRNA = N(6)-L-threonylcarbamoyladenosine(37) in tRNA + AMP + H(+). Its function is as follows. Required for the formation of a threonylcarbamoyl group on adenosine at position 37 (t(6)A37) in tRNAs that read codons beginning with adenine. Is involved in the transfer of the threonylcarbamoyl moiety of threonylcarbamoyl-AMP (TC-AMP) to the N6 group of A37, together with TsaE and TsaB. TsaD likely plays a direct catalytic role in this reaction. The protein is tRNA N6-adenosine threonylcarbamoyltransferase of Thioalkalivibrio sulfidiphilus (strain HL-EbGR7).